Consider the following 441-residue polypeptide: NADH-quinone oxidoreductase subunit D (441 aa).

Belongs to the complex I 49 kDa subunit family. NDH-1 is composed of 14 different subunits. Subunits NuoB, C, D, E, F, and G constitute the peripheral sector of the complex.

The protein localises to the cell membrane. The enzyme catalyses a quinone + NADH + 5 H(+)(in) = a quinol + NAD(+) + 4 H(+)(out). NDH-1 shuttles electrons from NADH, via FMN and iron-sulfur (Fe-S) centers, to quinones in the respiratory chain. The immediate electron acceptor for the enzyme in this species is believed to be a menaquinone. Couples the redox reaction to proton translocation (for every two electrons transferred, four hydrogen ions are translocated across the cytoplasmic membrane), and thus conserves the redox energy in a proton gradient. The protein is NADH-quinone oxidoreductase subunit D of Mycobacterium avium (strain 104).